The following is a 440-amino-acid chain: Tryptophan synthase beta chain 2 (440 aa).

Residue K110 is modified to N6-(pyridoxal phosphate)lysine.

It belongs to the TrpB family. In terms of assembly, tetramer of two alpha and two beta chains. Pyridoxal 5'-phosphate serves as cofactor.

The catalysed reaction is (1S,2R)-1-C-(indol-3-yl)glycerol 3-phosphate + L-serine = D-glyceraldehyde 3-phosphate + L-tryptophan + H2O. The protein operates within amino-acid biosynthesis; L-tryptophan biosynthesis; L-tryptophan from chorismate: step 5/5. In terms of biological role, the beta subunit is responsible for the synthesis of L-tryptophan from indole and L-serine. The chain is Tryptophan synthase beta chain 2 (trpB2) from Pyrococcus abyssi (strain GE5 / Orsay).